A 166-amino-acid polypeptide reads, in one-letter code: UPF0304 protein VP0990 (166 aa).

Belongs to the UPF0304 family.

The chain is UPF0304 protein VP0990 from Vibrio parahaemolyticus serotype O3:K6 (strain RIMD 2210633).